The chain runs to 550 residues: Probable endochitinase (550 aa).

The first 16 residues, 1-16, serve as a signal peptide directing secretion; that stretch reads MLHYLATILWLAVAHA. 2 N-linked (GlcNAc...) asparagine; by host glycosylation sites follow: asparagine 146 and asparagine 172. The 401-residue stretch at 147–547 folds into the GH18 domain; the sequence is KTVAAYFVEW…NAMNERVRVK (401 aa). Glutamate 304 functions as the Proton donor in the catalytic mechanism. Asparagine 344 carries an N-linked (GlcNAc...) asparagine; by host glycan. The short motif at 547 to 550 is the Prevents secretion from ER element; it reads KDEL.

It belongs to the glycosyl hydrolase 18 family. Chitinase class II subfamily.

It localises to the host endoplasmic reticulum lumen. It catalyses the reaction Random endo-hydrolysis of N-acetyl-beta-D-glucosaminide (1-&gt;4)-beta-linkages in chitin and chitodextrins.. This is Probable endochitinase from Orgyia pseudotsugata (Douglas-fir tussock moth).